Consider the following 462-residue polypeptide: MDMSSMAGSIGVSVAVLRFLLCFVATIPVSFACRIVPSRLGKHLYAAASGAFLSYLSFGFSSNLHFLVPMTIGYASMAIYRPKCGIITFFLGFAYLIGCHVFYMSGDAWKEGGIDSTGALMVLTLKVISCSMNYNDGMLKEEGLREAQKKNRLIQMPSLIEYFGYCLCCGSHFAGPVYEMKDYLEWTEGKGIWDTTEKRKKPSPYGATIRAILQAAICMALYLYLVPQYPLTRFTEPVYQEWGFLRKFSYQYMAGFTARWKYYFIWSISEASIIISGLGFSGWTDDASPKPKWDRAKNVDILGVELAKSAVQIPLVWNIQVSTWLRHYVYERLVQNGKKAGFFQLLATQTVSAVWHGLYPGYMMFFVQSALMIAGSRVIYRWQQAISPKMAMLRNIMVFINFLYTVLVLNYSAVGFMVLSLHETLTAYGSVYYIGTIIPVGLILLSYVVPAKPSRPKPRKEE.

The next 9 membrane-spanning stretches (helical) occupy residues Ser9–Val29, Phe52–Ile72, Cys84–Met104, Ser158–Tyr178, Ala211–Leu231, Tyr263–Trp283, Ala353–Ile373, Ile396–Phe416, and Val431–Ala451. The active site involves His356.

It belongs to the membrane-bound acyltransferase family. As to expression, expressed in roots, rosette leaves, petals, stigma, chalazal endosperm of developing seeds and vascular bundles of siliques.

Its subcellular location is the endoplasmic reticulum membrane. It carries out the reaction a 1-acyl-sn-glycero-3-phosphocholine + an acyl-CoA = a 1,2-diacyl-sn-glycero-3-phosphocholine + CoA. It catalyses the reaction 1-(9Z-octadecenoyl)-sn-glycero-3-phosphocholine + (9Z)-octadecenoyl-CoA = 1,2-di-(9Z-octadecenoyl)-sn-glycero-3-phosphocholine + CoA. The enzyme catalyses 1-(9Z-octadecenoyl)-sn-glycero-3-phosphocholine + (9Z,12Z)-octadecadienoyl-CoA = 1-(9Z)-octadecenoyl-2-(9Z,12Z)-octadecadienoyl-sn-glycero-3-phosphocholine + CoA. The catalysed reaction is (9Z,12Z,15Z)-octadecatrienoyl-CoA + 1-(9Z-octadecenoyl)-sn-glycero-3-phosphocholine = 1-(9Z-octadecaenoyl)-2-(9Z,12Z,15Z-octadecatrienoyl)-sn-glycero-3-phosphocholine + CoA. It carries out the reaction a 1-acyl-sn-glycero-3-phosphoethanolamine + an acyl-CoA = a 1,2-diacyl-sn-glycero-3-phosphoethanolamine + CoA. It catalyses the reaction a 1-acyl-sn-glycero-3-phospho-L-serine + an acyl-CoA = a 1,2-diacyl-sn-glycero-3-phospho-L-serine + CoA. Lysophospholipid acyltransferase with broad specificity. Mediates the conversion of lysophosphatidylethanolamine (1-acyl-sn-glycero-3-phosphoethanolamine or LPE) into phosphatidylethanolamine (1,2-diacyl-sn-glycero-3-phosphoethanolamine or PE) (LPEAT activity). Catalyzes the acylation of lysophosphatidylserine (1-acyl-2-hydroxy-sn-glycero-3-phospho-L-serine or LPS) into phosphatidylserine (1,2-diacyl-sn-glycero-3-phospho-L-serine or PS) (LPSAT activity). Can convert lysophosphatidylcholine (1-acyl-sn-glycero-3-phosphocholine or LPC) into phosphatidylcholine (1,2-diacyl-sn-glycero-3-phosphocholine or PC) (LPCAT activity). Exhibits preference for C18-unsaturated acyl-CoA when transferring an acyl group to lysophosphatidylcholine. Can also utilize lysophosphatidylglycerol (LPG) as substrate in vitro. Has neither activity towards lysophosphatidic acid (LPA) nor lysophosphatidylinositol (LPI). Lysophospholipid acyltransferases catalyze the reacylation step of the phospholipid remodeling pathway also known as the Lands cycle. The primary function of the Lands cycle is to provide a route for acyl remodeling to modify fatty acid (FA) composition of phospholipids derived from the Kennedy pathway. Is involved in PC acyl editing and phosphocholine headgroup exchange between PC and diacylglycerols. This processes control the majority of acyl fluxes through PC to provide polyunsaturated fatty acids for triacylglycerols synthesis in seeds. Involved with LPCAT2 in the direct incorporation of newly synthesized fatty acids exported form the chloroplast into PC through acyl editing. The sequence is that of Lysophospholipid acyltransferase 1 from Arabidopsis thaliana (Mouse-ear cress).